The following is a 181-amino-acid chain: UPF0398 protein LMOf2365_1918 (181 aa).

It belongs to the UPF0398 family.

This is UPF0398 protein LMOf2365_1918 from Listeria monocytogenes serotype 4b (strain F2365).